Consider the following 662-residue polypeptide: U6 snRNA-specific terminal uridylyltransferase (662 aa).

The Mg(2+) site is built by aspartate 183 and aspartate 185. Residues 384-437 enclose the PAP-associated domain; it reads CKFFRELFKYYANFDFTNKAIYGKKAMQKKTLSSAHGGVEESPLMLMDPMDITH.

This sequence belongs to the DNA polymerase type-B-like family. As to quaternary structure, forms a complex composed of sart-3, terminal uridylyltransferase usip-1 and U6 snRNA; complex formation is mediated by usip-1 and sart-3 binding to U6 snRNA. Requires Mg(2+) as cofactor. It depends on Mn(2+) as a cofactor. In terms of tissue distribution, ubiquitously expressed.

It localises to the nucleus. It is found in the nucleoplasm. The catalysed reaction is RNA(n) + UTP = RNA(n)-3'-uridine ribonucleotide + diphosphate. Acts as a specific terminal uridylyltransferase for U6 snRNA. Responsible for the addition of UTP at the 3' end of U6 snRNA which stabilizes U6 snRNA. Does not have activity towards modified uridine containing 3'-monophosphorylation or 2'-O-methylation. This chain is U6 snRNA-specific terminal uridylyltransferase, found in Caenorhabditis elegans.